The following is a 265-amino-acid chain: Shikimate dehydrogenase (NADP(+)) (265 aa).

Shikimate is bound by residues 15–17 (SKS) and threonine 62. Residue lysine 66 is the Proton acceptor of the active site. Residues asparagine 87 and aspartate 102 each contribute to the shikimate site. Residues 127–131 (GAGGA), 151–156 (NRTVSR), and methionine 212 contribute to the NADP(+) site. A shikimate-binding site is contributed by tyrosine 214. An NADP(+)-binding site is contributed by glycine 234.

This sequence belongs to the shikimate dehydrogenase family. Homodimer.

The catalysed reaction is shikimate + NADP(+) = 3-dehydroshikimate + NADPH + H(+). The protein operates within metabolic intermediate biosynthesis; chorismate biosynthesis; chorismate from D-erythrose 4-phosphate and phosphoenolpyruvate: step 4/7. Involved in the biosynthesis of the chorismate, which leads to the biosynthesis of aromatic amino acids. Catalyzes the reversible NADPH linked reduction of 3-dehydroshikimate (DHSA) to yield shikimate (SA). The chain is Shikimate dehydrogenase (NADP(+)) from Thiobacillus denitrificans (strain ATCC 25259 / T1).